Reading from the N-terminus, the 65-residue chain is Large ribosomal subunit protein uL29 (65 aa).

Belongs to the universal ribosomal protein uL29 family.

The chain is Large ribosomal subunit protein uL29 from Lactobacillus delbrueckii subsp. bulgaricus (strain ATCC 11842 / DSM 20081 / BCRC 10696 / JCM 1002 / NBRC 13953 / NCIMB 11778 / NCTC 12712 / WDCM 00102 / Lb 14).